The primary structure comprises 404 residues: Cysteine desulfurase IscS (404 aa).

Residues 75 to 76 (AT), Asn-155, Gln-183, and 203 to 205 (SAH) contribute to the pyridoxal 5'-phosphate site. Lys-206 is subject to N6-(pyridoxal phosphate)lysine. Position 243 (Thr-243) interacts with pyridoxal 5'-phosphate. The Cysteine persulfide intermediate role is filled by Cys-328. [2Fe-2S] cluster is bound at residue Cys-328.

This sequence belongs to the class-V pyridoxal-phosphate-dependent aminotransferase family. NifS/IscS subfamily. In terms of assembly, homodimer. Forms a heterotetramer with IscU, interacts with other sulfur acceptors. Pyridoxal 5'-phosphate serves as cofactor.

The protein localises to the cytoplasm. The enzyme catalyses (sulfur carrier)-H + L-cysteine = (sulfur carrier)-SH + L-alanine. It participates in cofactor biosynthesis; iron-sulfur cluster biosynthesis. Functionally, master enzyme that delivers sulfur to a number of partners involved in Fe-S cluster assembly, tRNA modification or cofactor biosynthesis. Catalyzes the removal of elemental sulfur atoms from cysteine to produce alanine. Functions as a sulfur delivery protein for Fe-S cluster synthesis onto IscU, an Fe-S scaffold assembly protein, as well as other S acceptor proteins. This Pseudomonas fluorescens (strain Pf0-1) protein is Cysteine desulfurase IscS.